We begin with the raw amino-acid sequence, 790 residues long: Ribonucleoside-diphosphate reductase large subunit (790 aa).

Substrate-binding positions include Thr-208, 223–224 (SC), Gly-254, 436–440 (NLCTE), and 621–625 (PTVSS). Residues Cys-224 and Cys-453 are joined by a disulfide bond. Asn-436 acts as the Proton acceptor in catalysis. The active-site Cysteine radical intermediate is Cys-438. Glu-440 serves as the catalytic Proton acceptor.

The protein belongs to the ribonucleoside diphosphate reductase large chain family. Heterotetramer composed of a homodimer of the large subunit (R1) and a homodimer of the small subunit (R2). Larger multisubunit protein complex are also active, composed of (R1)n(R2)n.

It catalyses the reaction a 2'-deoxyribonucleoside 5'-diphosphate + [thioredoxin]-disulfide + H2O = a ribonucleoside 5'-diphosphate + [thioredoxin]-dithiol. Its function is as follows. Ribonucleoside-diphosphate reductase holoenzyme provides the precursors necessary for viral DNA synthesis. Allows virus growth in non-dividing cells, as well as reactivation from latency in infected hosts. Catalyzes the biosynthesis of deoxyribonucleotides from the corresponding ribonucleotides. The chain is Ribonucleoside-diphosphate reductase large subunit from Equus caballus (Horse).